The following is a 542-amino-acid chain: Organic anion transporter 3 (542 aa).

Over 1 to 20 (MTFSEILDRVGSMGRFQFLH) the chain is Cytoplasmic. A Phosphoserine modification is found at S4. A helical transmembrane segment spans residues 21-41 (VAILGLPILNMANHNLLQIFT). Residues 42 to 123 (AATPVHHCRP…LVCNSNKLKE (82 aa)) are Extracellular-facing. Residue N86 is glycosylated (N-linked (GlcNAc...) asparagine). A helical membrane pass occupies residues 124 to 144 (MAQSIFMAGILIGGLVLGDLS). At 145-154 (DRFGRRPILT) the chain is on the cytoplasmic side. A helical transmembrane segment spans residues 155–175 (CSYLLLAASGSGAAFSPTFPI). A topological domain (extracellular) is located at residue Y176. A helical membrane pass occupies residues 177–197 (MVFRFLCGFGISGITLSTVIL). Residues 198–212 (NVEWVPTRMRAIMST) are Cytoplasmic-facing. The helical transmembrane segment at 213–233 (ALGYCYTFGQFILPGLAYAIP) threads the bilayer. At 234 to 236 (QWR) the chain is on the extracellular side. Residues 237–257 (WLQLTVSIPFFIFFLSSWWTP) form a helical membrane-spanning segment. Residues 258–327 (ESIRWLVLSG…FRIPMLRRMT (70 aa)) lie on the Cytoplasmic side of the membrane. Residues 328–348 (FCLSLAWFATGFAYYSLAMGV) traverse the membrane as a helical segment. At 349–354 (EEFGVN) the chain is on the extracellular side. Residues 355 to 375 (LYILQIIFGGVDVPAKFITIL) traverse the membrane as a helical segment. The Cytoplasmic segment spans residues 376 to 386 (SLSYLGRHTTQ). Residues 387 to 407 (AAALLLAGGAILALTFVPLDL) traverse the membrane as a helical segment. Over 408–471 (QTVRTVLAVF…LVKITGEVQP (64 aa)) the chain is Extracellular. The helical transmembrane segment at 472 to 492 (FIPNIIYGITALLGGSAAFFL) threads the bilayer. Topologically, residues 493–542 (PETLNQPLPETIEDLENWSLRAKKPKQEPEVEKASQRIPLQPHGPGLGSS) are cytoplasmic. Residues 515-542 (KKPKQEPEVEKASQRIPLQPHGPGLGSS) are disordered. Basic and acidic residues predominate over residues 517-527 (PKQEPEVEKAS).

Belongs to the major facilitator (TC 2.A.1) superfamily. Organic cation transporter (TC 2.A.1.19) family.

The protein localises to the basolateral cell membrane. It carries out the reaction estrone 3-sulfate(out) + glutarate(in) = estrone 3-sulfate(in) + glutarate(out). It catalyses the reaction estrone 3-sulfate(in) + 2-oxoglutarate(out) = estrone 3-sulfate(out) + 2-oxoglutarate(in). The enzyme catalyses glutarate(in) + 2-oxoglutarate(out) = glutarate(out) + 2-oxoglutarate(in). The catalysed reaction is urate(in) + 2-oxoglutarate(out) = urate(out) + 2-oxoglutarate(in). It carries out the reaction taurocholate(out) + glutarate(in) = taurocholate(in) + glutarate(out). It catalyses the reaction dehydroepiandrosterone 3-sulfate(out) + glutarate(in) = dehydroepiandrosterone 3-sulfate(in) + glutarate(out). The enzyme catalyses prostaglandin F2alpha(out) + glutarate(in) = prostaglandin F2alpha(in) + glutarate(out). The catalysed reaction is prostaglandin F2alpha(out) + 2-oxoglutarate(in) = prostaglandin F2alpha(in) + 2-oxoglutarate(out). It carries out the reaction (R)-carnitine(out) + 2-oxoglutarate(in) = (R)-carnitine(in) + 2-oxoglutarate(out). It catalyses the reaction glutarate(in) + (R)-carnitine(out) = glutarate(out) + (R)-carnitine(in). The enzyme catalyses prostaglandin E2(out) + 2-oxoglutarate(in) = prostaglandin E2(in) + 2-oxoglutarate(out). The catalysed reaction is prostaglandin E2(out) + glutarate(in) = prostaglandin E2(in) + glutarate(out). It carries out the reaction urate(in) + glutarate(out) = urate(out) + glutarate(in). It catalyses the reaction taurocholate(out) + 2-oxoglutarate(in) = taurocholate(in) + 2-oxoglutarate(out). The enzyme catalyses dehydroepiandrosterone 3-sulfate(out) + 2-oxoglutarate(in) = dehydroepiandrosterone 3-sulfate(in) + 2-oxoglutarate(out). The catalysed reaction is kynurenate(out) + a dicarboxylate(in) = kynurenate(in) + a dicarboxylate(out). It carries out the reaction (indol-3-yl)acetate(out) + a dicarboxylate(in) = (indol-3-yl)acetate(in) + a dicarboxylate(out). It catalyses the reaction indoxyl sulfate(out) + a dicarboxylate(in) = indoxyl sulfate(in) + a dicarboxylate(out). The enzyme catalyses N-benzoylglycine(out) + a dicarboxylate(in) = N-benzoylglycine(in) + a dicarboxylate(out). The catalysed reaction is 3-carboxy-4-methyl-5-propyl-2-furanpropanoate(out) + a dicarboxylate(in) = 3-carboxy-4-methyl-5-propyl-2-furanpropanoate(in) + a dicarboxylate(out). It carries out the reaction (6R)-L-erythro-5,6,7,8-tetrahydrobiopterin(out) + a dicarboxylate(in) = (6R)-L-erythro-5,6,7,8-tetrahydrobiopterin(in) + a dicarboxylate(out). It catalyses the reaction L-erythro-7,8-dihydrobiopterin(out) + a dicarboxylate(in) = L-erythro-7,8-dihydrobiopterin(in) + a dicarboxylate(out). The enzyme catalyses L-sepiapterin(out) + a dicarboxylate(in) = L-sepiapterin(in) + a dicarboxylate(out). Its function is as follows. Functions as an organic anion/dicarboxylate exchanger that couples organic anion uptake indirectly to the sodium gradient. Transports organic anions such as estrone 3-sulfate (E1S) and urate in exchange for dicarboxylates such as glutarate or ketoglutarate (2-oxoglutarate). Plays an important role in the excretion of endogenous and exogenous organic anions, especially from the kidney and the brain. E1S transport is pH- and chloride-dependent and may also involve E1S/cGMP exchange. Responsible for the transport of prostaglandin E2 (PGE2) and prostaglandin F2(alpha) (PGF2(alpha)) in the basolateral side of the renal tubule. Involved in the transport of neuroactive tryptophan metabolites kynurenate and xanthurenate. Functions as a biopterin transporters involved in the uptake and the secretion of coenzymes tetrahydrobiopterin (BH4), dihydrobiopterin (BH2) and sepiapterin to urine, thereby determining baseline levels of blood biopterins. May be involved in the basolateral transport of steviol, a metabolite of the popular sugar substitute stevioside. May participate in the detoxification/ renal excretion of drugs and xenobiotics, such as the histamine H(2)-receptor antagonists fexofenadine and cimetidine, the antibiotic benzylpenicillin (PCG), the anionic herbicide 2,4-dichloro-phenoxyacetate (2,4-D), the diagnostic agent p-aminohippurate (PAH), the antiviral acyclovir (ACV), and the mycotoxin ochratoxin (OTA), by transporting these exogenous organic anions across the cell membrane in exchange for dicarboxylates such as 2-oxoglutarate. Contributes to the renal uptake of potent uremic toxins (indoxyl sulfate (IS), indole acetate (IA), hippurate/N-benzoylglycine (HA) and 3-carboxy-4-methyl-5-propyl-2-furanpropionate (CMPF)), pravastatin, PCG, E1S and dehydroepiandrosterone sulfate (DHEAS), and is partly involved in the renal uptake of temocaprilat (an angiotensin-converting enzyme (ACE) inhibitor). May contribute to the release of cortisol in the adrenals. Involved in one of the detoxification systems on the choroid plexus (CP), removes substrates such as E1S or taurocholate (TC), PCG, 2,4-D and PAH, from the cerebrospinal fluid (CSF) to the blood for eventual excretion in urine and bile. Also contributes to the uptake of several other organic compounds such as the prostanoids prostaglandin E(2) and prostaglandin F(2-alpha), L-carnitine, and the therapeutic drugs allopurinol, 6-mercaptopurine (6-MP) and 5-fluorouracil (5-FU). Mediates the transport of PAH, PCG, and the statins pravastatin and pitavastatin, from the cerebrum into the blood circulation across the blood-brain barrier (BBB). In summary, plays a role in the efflux of drugs and xenobiotics, helping reduce their undesired toxicological effects on the body. This Pongo abelii (Sumatran orangutan) protein is Organic anion transporter 3 (SLC22A8).